The primary structure comprises 220 residues: pH-response regulator palI/RIM9 homolog 1 (220 aa).

The Cytoplasmic portion of the chain corresponds to 1 to 5 (MSHFK). The helical transmembrane segment at 6–26 (IVFLTSLSLALVFELFNTISV) threads the bilayer. The Extracellular segment spans residues 27-89 (PITSHLFISE…NHAKYALSKL (63 aa)). The helical transmembrane segment at 90–110 (LLVHVLSFVCVLVFWLFAILI) threads the bilayer. The Cytoplasmic portion of the chain corresponds to 111–121 (CIKWLNTSKSV). Residues 122-142 (LLFAVGWSMVTFMVSLLGFLI) traverse the membrane as a helical segment. Residues 143-155 (DVLMFASHVTWSS) lie on the Extracellular side of the membrane. The helical transmembrane segment at 156–176 (WLMLVSAFFVALSGILLCLMI) threads the bilayer. Topologically, residues 177–220 (RDLSYRRFVKLQGEVDVCVPMTEPRDPDELNEIWKKKTSKREIL) are cytoplasmic.

It belongs to the palI/RIM9 family.

The protein localises to the cell membrane. Its function is as follows. Required for the proteolytic cleavage of the transcription factor RIM101 in response to alkaline ambient pH. This Kluyveromyces lactis (strain ATCC 8585 / CBS 2359 / DSM 70799 / NBRC 1267 / NRRL Y-1140 / WM37) (Yeast) protein is pH-response regulator palI/RIM9 homolog 1.